A 344-amino-acid chain; its full sequence is Centromere protein N (344 aa).

The protein belongs to the CENP-N/CHL4 family.

It is found in the nucleus. It localises to the chromosome. The protein localises to the centromere. In terms of biological role, probable component of a centromeric complex involved in assembly of kinetochore proteins, mitotic progression and chromosome segregation. This is Centromere protein N (CENPN) from Gallus gallus (Chicken).